The chain runs to 127 residues: uncharacterized protein (127 aa).

2 consecutive transmembrane segments (helical) span residues 48–68 (LYSL…PLSI) and 83–103 (VFLF…CLID).

Its subcellular location is the membrane. This is an uncharacterized protein from Saccharomyces cerevisiae (strain ATCC 204508 / S288c) (Baker's yeast).